The chain runs to 95 residues: Acylphosphatase (95 aa).

Residues 10–95 (CIHATVSGKV…VEDYSDFRVR (86 aa)) form the Acylphosphatase-like domain. Catalysis depends on residues arginine 25 and asparagine 43.

This sequence belongs to the acylphosphatase family.

It carries out the reaction an acyl phosphate + H2O = a carboxylate + phosphate + H(+). The sequence is that of Acylphosphatase (acyP) from Coxiella burnetii (strain Dugway 5J108-111).